Reading from the N-terminus, the 261-residue chain is Imidazole glycerol phosphate synthase subunit HisF (261 aa).

Catalysis depends on residues D12 and D131.

The protein belongs to the HisA/HisF family. In terms of assembly, heterodimer of HisH and HisF.

The protein localises to the cytoplasm. It carries out the reaction 5-[(5-phospho-1-deoxy-D-ribulos-1-ylimino)methylamino]-1-(5-phospho-beta-D-ribosyl)imidazole-4-carboxamide + L-glutamine = D-erythro-1-(imidazol-4-yl)glycerol 3-phosphate + 5-amino-1-(5-phospho-beta-D-ribosyl)imidazole-4-carboxamide + L-glutamate + H(+). It functions in the pathway amino-acid biosynthesis; L-histidine biosynthesis; L-histidine from 5-phospho-alpha-D-ribose 1-diphosphate: step 5/9. Its function is as follows. IGPS catalyzes the conversion of PRFAR and glutamine to IGP, AICAR and glutamate. The HisF subunit catalyzes the cyclization activity that produces IGP and AICAR from PRFAR using the ammonia provided by the HisH subunit. In Brucella melitensis biotype 2 (strain ATCC 23457), this protein is Imidazole glycerol phosphate synthase subunit HisF.